A 327-amino-acid polypeptide reads, in one-letter code: Probable pectinesterase A (327 aa).

Residues 1–19 form the signal peptide; the sequence is MHTPYLLGALAALAATAVG. An N-linked (GlcNAc...) asparagine glycan is attached at asparagine 84. Glutamine 145 is a substrate binding site. The Proton donor role is filled by aspartate 168. Aspartate 189 acts as the Nucleophile in catalysis. Residues arginine 249 and tryptophan 251 each contribute to the substrate site. The N-linked (GlcNAc...) asparagine glycan is linked to asparagine 288.

This sequence belongs to the pectinesterase family.

The protein resides in the secreted. It catalyses the reaction [(1-&gt;4)-alpha-D-galacturonosyl methyl ester](n) + n H2O = [(1-&gt;4)-alpha-D-galacturonosyl](n) + n methanol + n H(+). It functions in the pathway glycan metabolism; pectin degradation; 2-dehydro-3-deoxy-D-gluconate from pectin: step 1/5. Involved in maceration and soft-rotting of plant tissue. The chain is Probable pectinesterase A (pmeA) from Aspergillus niger (strain ATCC MYA-4892 / CBS 513.88 / FGSC A1513).